The chain runs to 728 residues: Polyribonucleotide nucleotidyltransferase (728 aa).

Mg(2+)-binding residues include aspartate 487 and aspartate 493. The region spanning 554-613 (PRIEVITVPTDKIREVIGTGGKVIREIVEKTGAKVDISDDGTIKVASSDGESIRKAIAWI) is the KH domain. Positions 623-691 (GKIYEGTVVK…DRGKVRLSMK (69 aa)) constitute an S1 motif domain. The span at 697–707 (TGEEIVYENEP) shows a compositional bias: acidic residues. The tract at residues 697–728 (TGEEIVYENEPAEQPREKREGGGGRGRRRERD) is disordered. Basic and acidic residues predominate over residues 709-718 (EQPREKREGG).

This sequence belongs to the polyribonucleotide nucleotidyltransferase family. Requires Mg(2+) as cofactor.

The protein localises to the cytoplasm. The catalysed reaction is RNA(n+1) + phosphate = RNA(n) + a ribonucleoside 5'-diphosphate. Involved in mRNA degradation. Catalyzes the phosphorolysis of single-stranded polyribonucleotides processively in the 3'- to 5'-direction. The chain is Polyribonucleotide nucleotidyltransferase from Parvibaculum lavamentivorans (strain DS-1 / DSM 13023 / NCIMB 13966).